We begin with the raw amino-acid sequence, 1360 residues long: MSAGASATGPRRGPPGLEEATSKKKQKDRANLESKDGDARRVSLPRKEPTKDELLLDWRQSADEVIVKLRVGTGPVRLEDVDAAFTDTDCVVRLPDGRQWGGVFFAEIQSSCTKVQARKGGLLQLVLPKKVPLLTWPSLLKPLGTQELVPGLQCQENGQELSPIALEPGSEPRRAKQEARNQKRAQGRGEVGSGAGPGTQAGPSAKRAVHLRRGPEGEGSMDGPGPQGDAPSFLSDSATQVEAEEKLCAPPMNTQTSLLSSEKSLALLTVEKTVSPRNDPVAPVMVQDRDPEPEQEDQVKEEMALGADPTALVEEPESMVNLAFVKNDSYEKGPDSVVVHVYVKEIRRDSSRVLFREQDFTLIFQTRDGNFLRLHPGCGPHTIFRWQVKLRNLIEPEQCTFCFTASRIDICLRKRQSQRWGGLEAPATRGAVGGAKVAVPTGPTPLDSTPPGGGPHPLTGQEEARAVEKEKPKARSEDSGLDGVVARTPLEHVAPKPDPHLASPKPTCMVPPMPHSPVSGDSVEEDEEEEKKVCLPGFTGLVNLGNTCFMNSVIQSLSNTRELRDFFHDRSFEAEINYNNPLGTGGRLAIGFAVLLRALWKGTHQAFQPSKLKAIVASKASQFTGYAQHDAQEFMAFLLDGLHEDLNRIQNKPYTETVDSDGRPDEVVAEEAWQRHKMRNDSFIVDLFQGQYKSKLVCPVCAKVSITFDPFLYLPVPLPQKQKVLPIFYFAREPHSKPIKFLVSVSKENSSASEVLDSLSQSVHVKPENLRLAEVIKNRFHRVFLPSHSLDAVSPTDVLLCFELLSPELAKERVVVLEVQQRPQVPSIPISKCAACQRKQQSEEEKLKRCTRCYRVGYCNQFCQKTHWPDHKGLCRPENIGYPFLVSVPASRLTYARLAQLLEGYARYSVSVFQPPFQPGRMALESQSPGCTTLLSTSSLEAGDSEREPIQPSELQLVTPVAEGDTGAHRVWPPADRGPVPSTSGLSSEMLASGPIEGCPLLAGERVSRPEAAVPGYQHSSESVNTHTPQFFIYKIDASNREQRLEDKGETPLELGDDCSLALVWRNNERLQEFVLVASKELECAEDPGSAGEAARAGHFTLDQCLNLFTRPEVLAPEEAWYCPQCKQHREASKQLLLWRLPNVLIVQLKRFSFRSFIWRDKINDLVEFPVRNLDLSKFCIGQKEEQLPSYDLYAVINHYGGMIGGHYTACARLPNDRSSQRSDVGWRLFDDSTVTTVDESQVVTRYAYVLFYRRRNSPVERPPRASHSEHHPDLGPAAEAAASQASRIWQELEAEEEMVPEGPGPLGPWGPQDWVGPPPRGPTTPDEGCLRYFVLGTVAALVALVLNVFYPLVSQSRWR.

The tract at residues Met1–Arg46 is disordered. The Cytoplasmic segment spans residues Met1–Tyr1333. Basic and acidic residues predominate over residues Asp28–Arg46. The CS 1 domain occupies Lys51–Leu140. Residues Pro163–Thr239 are disordered. Residues Ser170–Asn181 show a composition bias toward basic and acidic residues. Residues Gly189–Thr199 are compositionally biased toward gly residues. Residue Ser220 is modified to Phosphoserine. Residues Leu322–Glu424 enclose the CS 2 domain. Positions Val432–Asp482 are disordered. Residues Glu462–Asp478 are compositionally biased toward basic and acidic residues. The USP domain maps to Thr539 to Arg1256. Residue Cys548 is the Nucleophile of the active site. Zn(2+) is bound by residues Cys833, Cys836, Cys850, Cys853, Cys859, Cys863, His871, and Cys875. An MYND-type zinc finger spans residues Cys833 to Cys875. A disordered region spans residues Asp965–Ser988. Catalysis depends on His1207, which acts as the Proton acceptor. Positions Pro1259–Asp1274 are enriched in basic and acidic residues. Positions Pro1259–Ala1281 are disordered. A helical transmembrane segment spans residues Phe1334–Val1354. Residues Ser1355–Arg1360 are Lumenal-facing.

As to quaternary structure, interacts with RNF123. Interacts with BIRC2/c-IAP1, BIRC3/c-IAP2 and XIAP/BIRC4. Interacts with HIF1A (via N-terminus).

Its subcellular location is the endoplasmic reticulum membrane. The catalysed reaction is Thiol-dependent hydrolysis of ester, thioester, amide, peptide and isopeptide bonds formed by the C-terminal Gly of ubiquitin (a 76-residue protein attached to proteins as an intracellular targeting signal).. Functionally, deubiquitinating enzyme that regulates the degradation of various proteins by removing ubiquitin moieties, thereby preventing their proteasomal degradation. Stabilizes RNF123, which promotes CDKN1B degradation and contributes to cell proliferation. Decreases the levels of ubiquitinated proteins during skeletal muscle formation and acts to repress myogenesis. Modulates transcription of major myofibrillar proteins. Also involved in turnover of endoplasmic-reticulum-associated degradation (ERAD) substrates. Mechanistically, deubiquitinates and thereby stabilizes several E3 ligases involved in the ERAD pathway including SYVN1 or MARCHF6. Regulates the stability of other E3 ligases including BIRC2/c-IAP1 and BIRC3/c-IAP2 by preventing their ubiquitination. Required for cells to mount an appropriate response to hypoxia by rescuing HIF1A from degradation in a non-catalytic manner and by mediating the deubiquitination of FUNDC1. Attenuates mitochondrial damage and ferroptosis by targeting and stabilizing NADPH oxidase 4/NOX4. Negatively regulates TNF-alpha- and IL-1beta-triggered NF-kappa-B activation by hydrolyzing 'Lys-27'- and 'Lys-63'-linked polyubiquitin chains from MAP3K7. Modulates also the protein level and aggregation of polyQ-expanded huntingtin/HTT through HSP90AA1. This chain is Ubiquitin carboxyl-terminal hydrolase 19 (Usp19), found in Mus musculus (Mouse).